Reading from the N-terminus, the 216-residue chain is Adenylate kinase (216 aa).

10–15 provides a ligand contact to ATP; that stretch reads GAGKGT. The segment at 30-59 is NMP; it reads STGDIFRANIKEKTPLGIEAKRYIDNGQLV. AMP contacts are provided by residues T31, R36, 57 to 59, 85 to 88, and Q92; these read QLV and GFPR. The tract at residues 126–163 is LID; the sequence is GRRVCTSCGASYHIRFNPPKIEGKCDICDNELIQRKDD. R127 is an ATP binding site. Zn(2+) is bound by residues C130 and C133. 136–137 serves as a coordination point for ATP; that stretch reads SY. 2 residues coordinate Zn(2+): C150 and C153. Residues R160 and R171 each contribute to the AMP site. E199 serves as a coordination point for ATP.

This sequence belongs to the adenylate kinase family. In terms of assembly, monomer.

It localises to the cytoplasm. The catalysed reaction is AMP + ATP = 2 ADP. The protein operates within purine metabolism; AMP biosynthesis via salvage pathway; AMP from ADP: step 1/1. Functionally, catalyzes the reversible transfer of the terminal phosphate group between ATP and AMP. Plays an important role in cellular energy homeostasis and in adenine nucleotide metabolism. This chain is Adenylate kinase, found in Clostridium botulinum (strain Langeland / NCTC 10281 / Type F).